Here is a 471-residue protein sequence, read N- to C-terminus: 3-isopropylmalate dehydratase large subunit (471 aa).

The [4Fe-4S] cluster site is built by Cys347, Cys407, and Cys410.

This sequence belongs to the aconitase/IPM isomerase family. LeuC type 1 subfamily. As to quaternary structure, heterodimer of LeuC and LeuD. The cofactor is [4Fe-4S] cluster.

It catalyses the reaction (2R,3S)-3-isopropylmalate = (2S)-2-isopropylmalate. Its pathway is amino-acid biosynthesis; L-leucine biosynthesis; L-leucine from 3-methyl-2-oxobutanoate: step 2/4. Catalyzes the isomerization between 2-isopropylmalate and 3-isopropylmalate, via the formation of 2-isopropylmaleate. This is 3-isopropylmalate dehydratase large subunit from Geobacillus sp. (strain WCH70).